An 83-amino-acid chain; its full sequence is Cell division topological specificity factor (83 aa).

The protein belongs to the MinE family.

Its function is as follows. Prevents the cell division inhibition by proteins MinC and MinD at internal division sites while permitting inhibition at polar sites. This ensures cell division at the proper site by restricting the formation of a division septum at the midpoint of the long axis of the cell. This chain is Cell division topological specificity factor, found in Marinobacter nauticus (strain ATCC 700491 / DSM 11845 / VT8) (Marinobacter aquaeolei).